The following is a 180-amino-acid chain: Crossover junction endodeoxyribonuclease RuvC (180 aa).

Active-site residues include aspartate 7, glutamate 66, and aspartate 138. Mg(2+)-binding residues include aspartate 7, glutamate 66, and aspartate 138.

The protein belongs to the RuvC family. In terms of assembly, homodimer which binds Holliday junction (HJ) DNA. The HJ becomes 2-fold symmetrical on binding to RuvC with unstacked arms; it has a different conformation from HJ DNA in complex with RuvA. In the full resolvosome a probable DNA-RuvA(4)-RuvB(12)-RuvC(2) complex forms which resolves the HJ. Requires Mg(2+) as cofactor.

The protein localises to the cytoplasm. It carries out the reaction Endonucleolytic cleavage at a junction such as a reciprocal single-stranded crossover between two homologous DNA duplexes (Holliday junction).. Functionally, the RuvA-RuvB-RuvC complex processes Holliday junction (HJ) DNA during genetic recombination and DNA repair. Endonuclease that resolves HJ intermediates. Cleaves cruciform DNA by making single-stranded nicks across the HJ at symmetrical positions within the homologous arms, yielding a 5'-phosphate and a 3'-hydroxyl group; requires a central core of homology in the junction. The consensus cleavage sequence is 5'-(A/T)TT(C/G)-3'. Cleavage occurs on the 3'-side of the TT dinucleotide at the point of strand exchange. HJ branch migration catalyzed by RuvA-RuvB allows RuvC to scan DNA until it finds its consensus sequence, where it cleaves and resolves the cruciform DNA. The chain is Crossover junction endodeoxyribonuclease RuvC from Burkholderia lata (strain ATCC 17760 / DSM 23089 / LMG 22485 / NCIMB 9086 / R18194 / 383).